Reading from the N-terminus, the 38-residue chain is MAKPNPNKQSVELNRTSLYWGLLLIFVLAVLFSSYIFN.

A helical transmembrane segment spans residues 17 to 37; it reads SLYWGLLLIFVLAVLFSSYIF.

Belongs to the PsbL family. PSII is composed of 1 copy each of membrane proteins PsbA, PsbB, PsbC, PsbD, PsbE, PsbF, PsbH, PsbI, PsbJ, PsbK, PsbL, PsbM, PsbT, PsbX, PsbY, PsbZ, Psb30/Ycf12, at least 3 peripheral proteins of the oxygen-evolving complex and a large number of cofactors. It forms dimeric complexes.

It localises to the plastid. The protein resides in the chloroplast thylakoid membrane. Functionally, one of the components of the core complex of photosystem II (PSII). PSII is a light-driven water:plastoquinone oxidoreductase that uses light energy to abstract electrons from H(2)O, generating O(2) and a proton gradient subsequently used for ATP formation. It consists of a core antenna complex that captures photons, and an electron transfer chain that converts photonic excitation into a charge separation. This subunit is found at the monomer-monomer interface and is required for correct PSII assembly and/or dimerization. The chain is Photosystem II reaction center protein L from Oltmannsiellopsis viridis (Marine flagellate).